Reading from the N-terminus, the 30-residue chain is Cyclotide mden-G (30 aa).

A cross-link (cyclopeptide (Gly-Asn)) is located at residues 1 to 30; the sequence is GIPCAESCVYIPCITAALGCSCKNKVCYRN. 3 disulfides stabilise this stretch: Cys-4–Cys-20, Cys-8–Cys-22, and Cys-13–Cys-27.

The protein belongs to the cyclotide family. Bracelet subfamily. Post-translationally, this is a cyclic peptide.

Functionally, probably participates in a plant defense mechanism. The sequence is that of Cyclotide mden-G from Melicytus dentatus (Tree violet).